The sequence spans 499 residues: NADH-quinone oxidoreductase subunit N (499 aa).

14 consecutive transmembrane segments (helical) span residues 16–36 (AAFS…LDAF), 42–62 (AIPW…ITHL), 77–97 (GGFV…TILL), 109–129 (YGEV…LGSA), 133–153 (VSIF…TGFI), 167–187 (FLLG…MYGA), 208–228 (LLFW…VSAA), 252–272 (ATKA…VPGG), 274–294 (WQLS…VMAL), 302–322 (LLAY…SAGT), 327–347 (AGAL…FGVM), 376–396 (GSTM…GGFI), 411–433 (TWLV…RVVY), and 463–483 (GTLV…GGVL).

Belongs to the complex I subunit 2 family. NDH-1 is composed of 14 different subunits. Subunits NuoA, H, J, K, L, M, N constitute the membrane sector of the complex.

It is found in the cell inner membrane. The enzyme catalyses a quinone + NADH + 5 H(+)(in) = a quinol + NAD(+) + 4 H(+)(out). NDH-1 shuttles electrons from NADH, via FMN and iron-sulfur (Fe-S) centers, to quinones in the respiratory chain. The immediate electron acceptor for the enzyme in this species is believed to be a menaquinone. Couples the redox reaction to proton translocation (for every two electrons transferred, four hydrogen ions are translocated across the cytoplasmic membrane), and thus conserves the redox energy in a proton gradient. This chain is NADH-quinone oxidoreductase subunit N, found in Salinibacter ruber (strain DSM 13855 / M31).